The primary structure comprises 673 residues: DNA ligase (673 aa).

NAD(+) is bound by residues 36–40 (DSEYD), 85–86 (SL), and E118. K120 serves as the catalytic N6-AMP-lysine intermediate. NAD(+) contacts are provided by R141, E178, K295, and K319. The Zn(2+) site is built by C413, C416, C431, and C437. Residues 596–673 (VRDNPLKGKT…SENEFLALLA (78 aa)) enclose the BRCT domain.

This sequence belongs to the NAD-dependent DNA ligase family. LigA subfamily. It depends on Mg(2+) as a cofactor. Mn(2+) is required as a cofactor.

The catalysed reaction is NAD(+) + (deoxyribonucleotide)n-3'-hydroxyl + 5'-phospho-(deoxyribonucleotide)m = (deoxyribonucleotide)n+m + AMP + beta-nicotinamide D-nucleotide.. DNA ligase that catalyzes the formation of phosphodiester linkages between 5'-phosphoryl and 3'-hydroxyl groups in double-stranded DNA using NAD as a coenzyme and as the energy source for the reaction. It is essential for DNA replication and repair of damaged DNA. The sequence is that of DNA ligase from Histophilus somni (strain 129Pt) (Haemophilus somnus).